The chain runs to 262 residues: Glutamate racemase (262 aa).

Substrate-binding positions include 7-8 (DS) and 39-40 (YG). Cysteine 70 functions as the Proton donor/acceptor in the catalytic mechanism. 71–72 (NT) provides a ligand contact to substrate. Cysteine 182 functions as the Proton donor/acceptor in the catalytic mechanism. A substrate-binding site is contributed by 183-184 (TH).

This sequence belongs to the aspartate/glutamate racemases family.

It catalyses the reaction L-glutamate = D-glutamate. It participates in cell wall biogenesis; peptidoglycan biosynthesis. Provides the (R)-glutamate required for cell wall biosynthesis. The protein is Glutamate racemase of Campylobacter concisus (strain 13826).